The primary structure comprises 927 residues: Isoleucine--tRNA ligase (927 aa).

A 'HIGH' region motif is present at residues 57-67; the sequence is PFANGNIHMGH. Position 553 (Glu-553) interacts with L-isoleucyl-5'-AMP. Residues 594-598 carry the 'KMSKS' region motif; it reads KMSKS. Lys-597 serves as a coordination point for ATP. Residues Cys-886, Cys-889, Cys-906, and Cys-909 each coordinate Zn(2+).

Belongs to the class-I aminoacyl-tRNA synthetase family. IleS type 1 subfamily. Monomer. It depends on Zn(2+) as a cofactor.

Its subcellular location is the cytoplasm. It carries out the reaction tRNA(Ile) + L-isoleucine + ATP = L-isoleucyl-tRNA(Ile) + AMP + diphosphate. Its function is as follows. Catalyzes the attachment of isoleucine to tRNA(Ile). As IleRS can inadvertently accommodate and process structurally similar amino acids such as valine, to avoid such errors it has two additional distinct tRNA(Ile)-dependent editing activities. One activity is designated as 'pretransfer' editing and involves the hydrolysis of activated Val-AMP. The other activity is designated 'posttransfer' editing and involves deacylation of mischarged Val-tRNA(Ile). This Lactobacillus acidophilus (strain ATCC 700396 / NCK56 / N2 / NCFM) protein is Isoleucine--tRNA ligase.